The following is a 425-amino-acid chain: Adenylosuccinate synthetase (425 aa).

GTP contacts are provided by residues 12-18 (GDEGKGK) and 40-42 (GHT). The active-site Proton acceptor is the D13. The Mg(2+) site is built by D13 and G40. Residues 13–16 (DEGK), 38–41 (NAGH), T130, R144, Q224, T239, and R301 each bind IMP. The active-site Proton donor is H41. Position 297–303 (297–303 (TVSNRRR)) interacts with substrate. GTP contacts are provided by residues R303, 329–331 (KLD), and 411–413 (STS).

Belongs to the adenylosuccinate synthetase family. Homodimer. It depends on Mg(2+) as a cofactor.

Its subcellular location is the cytoplasm. The enzyme catalyses IMP + L-aspartate + GTP = N(6)-(1,2-dicarboxyethyl)-AMP + GDP + phosphate + 2 H(+). The protein operates within purine metabolism; AMP biosynthesis via de novo pathway; AMP from IMP: step 1/2. Plays an important role in the de novo pathway of purine nucleotide biosynthesis. Catalyzes the first committed step in the biosynthesis of AMP from IMP. This chain is Adenylosuccinate synthetase, found in Wolbachia sp. subsp. Drosophila simulans (strain wRi).